Here is a 307-residue protein sequence, read N- to C-terminus: Protoheme IX farnesyltransferase (307 aa).

The next 9 helical transmembrane spans lie at 28-48 (VTQL…PGMV), 50-70 (WPVL…AFAI), 100-120 (ILLF…VFAN), 122-142 (LTMW…TLLL), 149-169 (NIVI…AAVA), 176-196 (AWIL…ALAL), 218-238 (FTLL…ILPF), 243-263 (SGYL…VHAW), and 282-302 (IVYL…KFGP).

The protein belongs to the UbiA prenyltransferase family. Protoheme IX farnesyltransferase subfamily.

It localises to the cell inner membrane. The catalysed reaction is heme b + (2E,6E)-farnesyl diphosphate + H2O = Fe(II)-heme o + diphosphate. The protein operates within porphyrin-containing compound metabolism; heme O biosynthesis; heme O from protoheme: step 1/1. Converts heme B (protoheme IX) to heme O by substitution of the vinyl group on carbon 2 of heme B porphyrin ring with a hydroxyethyl farnesyl side group. The polypeptide is Protoheme IX farnesyltransferase (Ralstonia nicotianae (strain ATCC BAA-1114 / GMI1000) (Ralstonia solanacearum)).